The following is a 788-amino-acid chain: Integrin beta-6 (788 aa).

Positions 1 to 21 (MGIELLCLFFLFLGRNDHVQG) are cleaved as a signal peptide. The 50-residue stretch at 22 to 71 (GCALGGAETCEDCLLIGPQCAWCSQENFTYLSGVGERCDTPANLLAKGCQ) folds into the PSI domain. Topologically, residues 22-709 (GCALGGAETC…KDCPKPPNSP (688 aa)) are extracellular. Disulfide bonds link cysteine 23–cysteine 41, cysteine 31–cysteine 454, cysteine 34–cysteine 59, cysteine 44–cysteine 70, cysteine 197–cysteine 204, cysteine 252–cysteine 293, cysteine 394–cysteine 406, cysteine 426–cysteine 452, cysteine 456–cysteine 476, cysteine 467–cysteine 479, cysteine 481–cysteine 490, cysteine 492–cysteine 519, cysteine 502–cysteine 517, cysteine 511–cysteine 522, cysteine 524–cysteine 537, cysteine 539–cysteine 560, cysteine 544–cysteine 558, cysteine 552–cysteine 563, cysteine 565–cysteine 574, cysteine 576–cysteine 599, cysteine 583–cysteine 597, cysteine 591–cysteine 602, cysteine 604–cysteine 614, cysteine 617–cysteine 620, cysteine 624–cysteine 670, cysteine 630–cysteine 649, cysteine 633–cysteine 645, and cysteine 678–cysteine 702. N-linked (GlcNAc...) asparagine glycans are attached at residues asparagine 48 and asparagine 97. Positions 131 to 371 (YPVDLYYLMD…QLIISAYEEL (241 aa)) constitute a VWFA domain. The Mg(2+) site is built by aspartate 140, serine 142, and serine 144. Ca(2+) is bound by residues serine 144, aspartate 147, aspartate 148, and glutamate 179. Asparagine 235, aspartate 237, proline 239, and glutamate 240 together coordinate Ca(2+). Residue glutamate 240 participates in Mg(2+) binding. N-linked (GlcNAc...) asparagine glycosylation occurs at asparagine 260. The Ca(2+) site is built by aspartate 271 and lysine 355. A glycan (N-linked (GlcNAc...) asparagine) is linked at asparagine 387. N-linked (GlcNAc...) asparagine glycosylation is present at asparagine 418. I-EGF domains lie at 456-491 (CQKE…PHCE), 492-538 (CGED…PYCQ), 539-575 (CDDF…EYCN), and 576-615 (CTTS…LTCE). Asparagine 463 and asparagine 471 each carry an N-linked (GlcNAc...) asparagine glycan. The helical transmembrane segment at 710–730 (MIMLGVSLAILLIGVVLLCIW) threads the bilayer. The segment at 731 to 758 (KLLVSFHDRKEVAKFEAERSKAKWQTGT) is interaction with HAX1. Residues 731 to 788 (KLLVSFHDRKEVAKFEAERSKAKWQTGTNPLYRGSTSTFKNVTYKHREKQKVDLSMDG) lie on the Cytoplasmic side of the membrane.

The protein belongs to the integrin beta chain family. In terms of assembly, heterodimer of an alpha and a beta subunit. Interacts with FLNB. Interacts with HAX1. ITGAV:ITGB6 interacts with FBN1. ITGAV:ITGB6 interacts with TGFB1.

Its subcellular location is the cell membrane. The protein localises to the cell junction. It is found in the focal adhesion. Integrin alpha-V:beta-6 (ITGAV:ITGB6) is a receptor for fibronectin and cytotactin. It recognizes the sequence R-G-D in its ligands. ITGAV:ITGB6 acts as a receptor for fibrillin-1 (FBN1) and mediates R-G-D-dependent cell adhesion to FBN1. Integrin alpha-V:beta-6 (ITGAV:ITGB6) mediates R-G-D-dependent release of transforming growth factor beta-1 (TGF-beta-1) from regulatory Latency-associated peptide (LAP), thereby playing a key role in TGF-beta-1 activation. This chain is Integrin beta-6 (ITGB6), found in Sus scrofa (Pig).